The chain runs to 401 residues: Tryptophan synthase beta chain (401 aa).

Residue Lys-91 is modified to N6-(pyridoxal phosphate)lysine.

Belongs to the TrpB family. Tetramer of two alpha and two beta chains. It depends on pyridoxal 5'-phosphate as a cofactor.

The enzyme catalyses (1S,2R)-1-C-(indol-3-yl)glycerol 3-phosphate + L-serine = D-glyceraldehyde 3-phosphate + L-tryptophan + H2O. It participates in amino-acid biosynthesis; L-tryptophan biosynthesis; L-tryptophan from chorismate: step 5/5. Functionally, the beta subunit is responsible for the synthesis of L-tryptophan from indole and L-serine. The chain is Tryptophan synthase beta chain from Lactococcus lactis subsp. cremoris (strain SK11).